Reading from the N-terminus, the 200-residue chain is Insulin, isoform 2 (200 aa).

The tract at residues 148–200 is disordered; that stretch reads EVDSSPQPQGSESLPAQPPAQPAPQPEPQQAREPSPEVSCCGLWPRRPQRSQN. Positions 163–174 are enriched in pro residues; that stretch reads AQPPAQPAPQPE. Residues 175 to 184 are compositionally biased toward low complexity; sequence PQQAREPSPE.

In terms of tissue distribution, expressed in pancreas, eye and, to a lower extent, in limb.

The polypeptide is Insulin, isoform 2 (INS-IGF2) (Homo sapiens (Human)).